Reading from the N-terminus, the 143-residue chain is Transcriptional regulator MraZ (143 aa).

2 consecutive SpoVT-AbrB domains span residues 5-47 (EYHH…PIEE) and 76-119 (AMES…SAER).

It belongs to the MraZ family. In terms of assembly, forms oligomers.

It localises to the cytoplasm. The protein resides in the nucleoid. In Lactobacillus gasseri (strain ATCC 33323 / DSM 20243 / BCRC 14619 / CIP 102991 / JCM 1131 / KCTC 3163 / NCIMB 11718 / NCTC 13722 / AM63), this protein is Transcriptional regulator MraZ.